The primary structure comprises 2898 residues: Papilin (2898 aa).

Residues 1–26 (MDLSRRLCSTALVAFIVLASIHDSQS) form the signal peptide. The tract at residues 43-67 (LPESSVTPGGEGNDPDEWTPWSSPS) is disordered. The region spanning 57 to 111 (PDEWTPWSSPSDCSRTCGGGVSYQTRECLRRDDRGEAVCSGGSRRYFSCNTQDCP) is the TSP type-1 1 domain. Cystine bridges form between C69–C105, C73–C110, and C84–C95. 2 N-linked (GlcNAc...) asparagine glycosylation sites follow: N258 and N319. The TSP type-1 2 domain maps to 338–397 (DTHTWTHHQFNACSASCGGGSQSRKVTCNNRITLAEVNPSLCDQKSKPVEEQACGTEPCA). N419 carries an N-linked (GlcNAc...) asparagine glycan. TSP type-1 domains lie at 461-521 (NCPK…TPCE), 522-575 (GVDW…KSPK), 576-633 (CEAQ…QDCE), and 639-694 (CPGE…EACT). 3 cysteine pairs are disulfide-bonded: C462–C504, C473–C515, and C477–C520. The N-linked (GlcNAc...) asparagine glycan is linked to N669. Disordered stretches follow at residues 699-1252 (LPLT…CAKS) and 1323-1367 (GEND…PDTK). Composition is skewed to acidic residues over residues 708–720 (IEDDEEDCDEDGI) and 727–738 (LSDDEKSEDVID). The segment covering 768-788 (STGTTFEGSGYDSESTTDSGI) has biased composition (polar residues). Residues 801–879 (EASTDLSSST…ASASESTDVS (79 aa)) show a composition bias toward low complexity. 5 N-linked (GlcNAc...) asparagine glycosylation sites follow: N889, N914, N917, N950, and N1064. Low complexity predominate over residues 890-1053 (ASDSTPESST…SDNTDITTDG (164 aa)). The span at 1064–1073 (NASTEGSTEG) shows a compositional bias: polar residues. Low complexity-rich tracts occupy residues 1076–1091 (EDTTISTESSGSTEST) and 1104–1215 (STVE…IWST). Residues 1237–1248 (SKPRKCKPKKST) show a composition bias toward basic residues. Positions 1330-1351 (PETTTVPPTTTTEETQPETTTE) are enriched in low complexity. N-linked (GlcNAc...) asparagine glycans are attached at residues N1489 and N1623. Intrachain disulfides connect C1612-C1662, C1621-C1645, C1637-C1658, C1671-C1721, C1680-C1704, C1696-C1717, C1730-C1780, C1739-C1763, C1755-C1776, C1790-C1840, C1799-C1823, C1815-C1836, C1849-C1899, C1858-C1882, and C1874-C1895. 5 consecutive BPTI/Kunitz inhibitor domains span residues 1612 to 1662 (CGLP…KDTC), 1671 to 1721 (CLLP…QGTC), 1730 to 1780 (CEQP…NYNC), 1790 to 1840 (CALP…EDHC), and 1849 to 1899 (CEIP…LARC). N-linked (GlcNAc...) asparagine glycosylation is present at N1750. A disordered region spans residues 1902–1928 (KPEPTTTTPATRPQPSRQDVCDEEPAP). Low complexity predominate over residues 1905 to 1916 (PTTTTPATRPQP). 3 disulfide bridges follow: C1922/C1972, C1931/C1955, and C1947/C1968. Residues 1922–1972 (CDEEPAPGECSTWVLKWHFDRKIGACRQFYYGNCGGNGNRFETENDCQQRC) enclose the BPTI/Kunitz inhibitor 6 domain. The disordered stretch occupies residues 1972–2004 (CLSQEPPAPTPPRAPAPTRQPDPAPTVAQCSQP). Residues 1977–1995 (PPAPTPPRAPAPTRQPDPA) show a composition bias toward pro residues. 18 cysteine pairs are disulfide-bonded: C2001-C2051, C2010-C2034, C2026-C2047, C2071-C2121, C2080-C2104, C2096-C2117, C2128-C2178, C2137-C2161, C2153-C2174, C2194-C2244, C2203-C2227, C2219-C2240, C2253-C2303, C2262-C2286, C2278-C2299, C2318-C2371, C2327-C2354, and C2346-C2367. BPTI/Kunitz inhibitor domains lie at 2001-2051 (CSQP…SARC), 2071-2121 (CFLA…QNEC), 2128-2178 (CALP…LNFC), 2194-2244 (CAEP…ERQC), 2253-2303 (CNEP…QTVC), and 2318-2371 (CLLP…TNQC). Residue N2020 is glycosylated (N-linked (GlcNAc...) asparagine). N2083 carries an N-linked (GlcNAc...) asparagine glycan. N-linked (GlcNAc...) asparagine glycosylation is present at N2205. The 47-residue stretch at 2452 to 2498 (DIYKPGECPALSANASGCARECYTDADCRGDNKCCSDGCGQLCVHPA) folds into the WAP domain. N-linked (GlcNAc...) asparagine glycans are attached at residues N2465, N2552, and N2625. 3 consecutive Ig-like C2-type domains span residues 2523 to 2607 (PKEA…REVA), 2617 to 2697 (PAYI…RPVS), and 2749 to 2840 (PTVN…ANVS). A disulfide bridge connects residues C2543 and C2592. 2 cysteine pairs are disulfide-bonded: C2640-C2687 and C2775-C2824. 2 N-linked (GlcNAc...) asparagine glycosylation sites follow: N2784 and N2838. Positions 2847–2886 (VSPECVDNPYFANCKLIVKGRYCSNPYYTQFCCRSCTLAG) constitute a PLAC domain.

This sequence belongs to the papilin family. In terms of assembly, homooligomer; disulfide-linked. N-glycosylated. Post-translationally, sulfated. During embryogenesis it first appears in the extracellular matrix during gastrulation and early mesoderm development at sites where basement membranes do not subsequently form. Later, migrating hemocytes prominently produce it together with other ECM components, in basement membranes that underlie epithelia and envelop muscles and emerging organs. At various life stages, it can be synthesized by other cells, such as those of the fat body, and it also occurs in a few, circumscribed regions of relatively amorphous ECM. Isoform E is specifically expressed in ECM of heart and proventriculus. Isoform C is a major component of transitory ECM deposit in the early embryo. Isoform F is a major component of the basement membrane during embryogenesis.

It localises to the secreted. It is found in the extracellular space. The protein resides in the extracellular matrix. The protein localises to the basement membrane. Functionally, essential extracellular matrix (ECM) protein that influences cell rearrangements. May act by modulating metalloproteinases action during organogenesis. Able to non-competitively inhibit procollagen N-proteinase, an ADAMTS metalloproteinase. The sequence is that of Papilin (Ppn) from Drosophila melanogaster (Fruit fly).